A 501-amino-acid polypeptide reads, in one-letter code: Dipeptide and tripeptide permease A (501 aa).

The Cytoplasmic portion of the chain corresponds to 1–34 (MSTANNNQPESISMNAFKQPKAFYLIFSIELWER). The helical transmembrane segment at 35-55 (FGYYGLQGIMAVYLVKMLGMS) threads the bilayer. Residues 56-59 (EADS) are Periplasmic-facing. The chain crosses the membrane as a helical span at residues 60–80 (ITLFSSFSALVYGFVAIGGWL). Residues 81–89 (GDKVLGAKR) are Cytoplasmic-facing. A run of 2 helical transmembrane segments spans residues 90–110 (VIVL…YSGH) and 111–131 (EIFW…LFKA). Residues 132 to 153 (NPSSLLSTCYSKDDPRLDGAFT) lie on the Periplasmic side of the membrane. The helical transmembrane segment at 154–174 (MYYMSINIGSFFSMLATPWLA) threads the bilayer. The Cytoplasmic segment spans residues 175-178 (AKYG). A helical membrane pass occupies residues 179–199 (WSVAFSLSVVGMLITLVNFWF). Topologically, residues 200-220 (CRKWVKNQGSKPDFLPLQFKK) are periplasmic. Residues 221–241 (LLMVLVGIIALITLSNWLLHN) form a helical membrane-spanning segment. Residues 242–246 (QIIAR) lie on the Cytoplasmic side of the membrane. The helical transmembrane segment at 247–267 (WALALVSLGIIFIFTKETLFL) threads the bilayer. The Periplasmic portion of the chain corresponds to 268 to 274 (QGIARRR). Residues 275 to 295 (MIVAFLLMLEAVIFFVLYSQM) form a helical membrane-spanning segment. The Cytoplasmic segment spans residues 296–320 (PTSLNFFAIHNVEHSIFGIGFEPEQ). A helical transmembrane segment spans residues 321–341 (FQALNPFWIMLASPILAAIYN). The Periplasmic portion of the chain corresponds to 342 to 352 (KMGDRLPMPHK). A helical transmembrane segment spans residues 353–373 (FAFGMMLCSAAFLVLPWGASF). Residues 374-383 (ANEHGIVSVN) lie on the Cytoplasmic side of the membrane. Residues 384 to 404 (WLILSYALQSIGELMISGLGL) form a helical membrane-spanning segment. At 405 to 414 (AMVAQLVPQR) the chain is on the periplasmic side. A helical membrane pass occupies residues 415–435 (LMGFIMGSWFLTTAAAALIAG). Topologically, residues 436-460 (KVAALTAVPSDAITDAHASLAIYSH) are cytoplasmic. A helical membrane pass occupies residues 461 to 481 (VFMQIGIVTAIIAVLMMLTAP). Residues 482–501 (KLYRMTLAPSDHNDVKIMTQ) lie on the Periplasmic side of the membrane.

This sequence belongs to the major facilitator superfamily. Proton-dependent oligopeptide transporter (POT/PTR) (TC 2.A.17) family. DtpA subfamily.

Its subcellular location is the cell inner membrane. In terms of biological role, proton-dependent permease that transports di- and tripeptides. In Yersinia pestis, this protein is Dipeptide and tripeptide permease A.